Here is a 237-residue protein sequence, read N- to C-terminus: MSKHQKKEVEVEFEKDDPKAVYLELFDKDTELKSLSDEIEKLTGEKDLELMKCDKDIYKSAEPLYRERRALLLEIPDFWATIFTNLFLKLGFVDELTMCVDDFFVEDTETEFRLFIDFRENDIISNKQVIITVTTPTTSEELSQEVKISTTPIELKQNKTETEKKNKDSKKSTDDEDEDEDDDEISGFLKFLLNPTKDIATFIVGSVWSNPIDSFCNDDDEDYDGLIASDSEGEEDK.

The segment covering 141–152 (ELSQEVKISTTP) has biased composition (polar residues). 2 disordered regions span residues 141 to 182 (ELSQ…DEDD) and 214 to 237 (SFCN…EEDK). Positions 156 to 173 (KQNKTETEKKNKDSKKST) are enriched in basic and acidic residues.

This sequence belongs to the nucleosome assembly protein (NAP) family.

The protein is Protein set homolog (set) of Dictyostelium discoideum (Social amoeba).